The chain runs to 585 residues: Zinc finger protein Eos (585 aa).

2 disordered regions span residues 1–43 (MHTP…PDFL) and 68–98 (EKEF…SANS). The span at 25–34 (QGKDNLERDP) shows a compositional bias: basic and acidic residues. Over residues 79 to 98 (SVSTPNSQHSSPSRSLSANS) the composition is skewed to polar residues. Residue K100 forms a Glycyl lysine isopeptide (Lys-Gly) (interchain with G-Cter in SUMO2) linkage. Position 105 is a phosphoserine (S105). C2H2-type zinc fingers lie at residues 159-181 (LKCD…KRSH), 187-209 (FHCN…IKLH), 215-237 (FKCP…LRTH), and 248-271 (YKCN…ERCH). The interaction with FOXP3 stretch occupies residues 281-585 (AQALAGQPGD…HIVRGEHKVG (305 aa)). K335 is modified (N6-acetyllysine). Positions 410-489 (PGRLELPGSR…QPPPTIVVGR (80 aa)) are disordered. Positions 425 to 429 (PEDLA) match the CTBP-binding motif PEDLA motif. Over residues 475–484 (QGPPPQPPPT) the composition is skewed to pro residues. K500 is covalently cross-linked (Glycyl lysine isopeptide (Lys-Gly) (interchain with G-Cter in SUMO2)). 2 C2H2-type zinc fingers span residues 530-552 (FKCE…MGCH) and 558-582 (FECN…RGEH).

It belongs to the Ikaros C2H2-type zinc-finger protein family. Self-associates. Interacts with other family members; IKZF1, IKZF2, IKZF3 and IKZF5. Interacts with CTBP2. Interacts with SPI1, MITF, FOXP3 and CTBP1. As to expression, highly expressed in skeletal muscle, low levels of expression in heart, thymus, kidney, liver, and spleen. Expressed in the hematopoietic cell lines MOLT-4, NALM-6 and K-562. Highly expressed in THP-1 and M-07e cell lines, which have characteristics of myeloid and early megakaryocytic cells respectively.

The protein resides in the nucleus. In terms of biological role, DNA-binding protein that binds to the 5'GGGAATRCC-3' Ikaros-binding sequence. Transcriptional repressor. Interacts with SPI1 and MITF to repress transcription of the CTSK and ACP5 promoters via recruitment of corepressors SIN3A and CTBP2. May be involved in the development of central and peripheral nervous systems. Essential for the inhibitory function of regulatory T-cells (Treg). Mediates FOXP3-mediated gene silencing in regulatory T-cells (Treg) via recruitment of corepressor CTBP1. This chain is Zinc finger protein Eos (IKZF4), found in Homo sapiens (Human).